The sequence spans 362 residues: Phenylalanine--tRNA ligase alpha subunit (362 aa).

Glutamate 263 serves as a coordination point for Mg(2+).

The protein belongs to the class-II aminoacyl-tRNA synthetase family. Phe-tRNA synthetase alpha subunit type 1 subfamily. Tetramer of two alpha and two beta subunits. It depends on Mg(2+) as a cofactor.

It localises to the cytoplasm. It carries out the reaction tRNA(Phe) + L-phenylalanine + ATP = L-phenylalanyl-tRNA(Phe) + AMP + diphosphate + H(+). This chain is Phenylalanine--tRNA ligase alpha subunit, found in Caulobacter sp. (strain K31).